Reading from the N-terminus, the 419-residue chain is UDP-N-acetylglucosamine 1-carboxyvinyltransferase (419 aa).

Position 22-23 (22-23 (KN)) interacts with phosphoenolpyruvate. Arg-91 contacts UDP-N-acetyl-alpha-D-glucosamine. The Proton donor role is filled by Cys-115. Cys-115 carries the 2-(S-cysteinyl)pyruvic acid O-phosphothioketal modification. UDP-N-acetyl-alpha-D-glucosamine is bound by residues 120–124 (RPVDL), 160–163 (KVSV), Asp-305, and Ile-327.

This sequence belongs to the EPSP synthase family. MurA subfamily.

The protein localises to the cytoplasm. The enzyme catalyses phosphoenolpyruvate + UDP-N-acetyl-alpha-D-glucosamine = UDP-N-acetyl-3-O-(1-carboxyvinyl)-alpha-D-glucosamine + phosphate. The protein operates within cell wall biogenesis; peptidoglycan biosynthesis. Its function is as follows. Cell wall formation. Adds enolpyruvyl to UDP-N-acetylglucosamine. The sequence is that of UDP-N-acetylglucosamine 1-carboxyvinyltransferase from Cronobacter sakazakii (strain ATCC BAA-894) (Enterobacter sakazakii).